A 112-amino-acid polypeptide reads, in one-letter code: Small ribosomal subunit protein bS6 (112 aa).

Belongs to the bacterial ribosomal protein bS6 family.

Its function is as follows. Binds together with bS18 to 16S ribosomal RNA. The protein is Small ribosomal subunit protein bS6 of Chlamydia felis (strain Fe/C-56) (Chlamydophila felis).